The chain runs to 1691 residues: Protein TIC 214 (1691 aa).

Helical transmembrane passes span 19–39, 60–80, 84–104, 123–143, 158–178, and 200–220; these read MLLG…SQIL, VLAQ…LLLL, LLTI…KDFP, LFLI…NSVL, TVFM…FNFF, and FIYA…LGRA. The disordered stretch occupies residues 819 to 839; it reads EKQHTLQRKHKEIGSKSRELK.

Belongs to the TIC214 family. As to quaternary structure, part of the Tic complex.

The protein resides in the plastid. It is found in the chloroplast inner membrane. In terms of biological role, involved in protein precursor import into chloroplasts. May be part of an intermediate translocation complex acting as a protein-conducting channel at the inner envelope. In Adiantum capillus-veneris (Maidenhair fern), this protein is Protein TIC 214.